The following is a 219-amino-acid chain: HTH-type transcriptional activator FasR (219 aa).

The segment at 1-30 is disordered; it reads MSDLANTAERRGEKRPAGGNRRGNRLPRDE. Positions 29 to 89 constitute an HTH tetR-type domain; sequence DERRGQLLIA…AVLQRHVDNL (61 aa). Positions 52–71 form a DNA-binding region, H-T-H motif; that stretch reads GMDEIADRAGVSKPVLYQHF.

In terms of assembly, homodimer.

With respect to regulation, fasR:DNA binding is regulated by long-chain acyl-CoAs (C14- to C26-CoA), which act as effector molecules that modulate the affinity of FasR for its DNA binding sequences and therefore modulate the expression of the essential fas-acpS operon. Transcriptional activator that plays a central role in sensing mycobacterial long-chain fatty acids and regulating lipid biosynthesis. Activates the expression of the genes encoding the fatty acid synthase (fas) and the 4-phosphopantetheinyl transferase (acpS), whose products are involved in the fatty acid and mycolic acid biosynthesis. Specifically binds to three conserved operator sequences present in the fas-acpS promoter region. Essential for M.smegmatis viability. This Mycolicibacterium smegmatis (strain ATCC 700084 / mc(2)155) (Mycobacterium smegmatis) protein is HTH-type transcriptional activator FasR.